The primary structure comprises 395 residues: F-box/LRR-repeat protein 12 (395 aa).

The 49-residue stretch at Thr-13–Cys-61 folds into the F-box domain. 10 LRR repeats span residues Asn-75 to Gly-100, Cys-101 to Cys-126, Cys-127 to Arg-152, Asn-154 to Tyr-177, Cys-178 to Asn-203, Ser-226 to Gly-250, Ser-252 to Met-278, Cys-279 to Leu-304, Cys-305 to Arg-330, and Cys-331 to Gly-356.

The protein is F-box/LRR-repeat protein 12 (FBL12) of Arabidopsis thaliana (Mouse-ear cress).